Reading from the N-terminus, the 122-residue chain is uncharacterized protein (122 aa).

A Phosphothreonine modification is found at T55. Phosphoserine occurs at positions 72, 86, 96, 112, and 118.

The protein localises to the cytoplasm. This is an uncharacterized protein from Homo sapiens (Human).